The primary structure comprises 334 residues: Phosphoribosylformylglycinamidine cyclo-ligase (334 aa).

The protein belongs to the AIR synthase family.

The protein localises to the cytoplasm. The enzyme catalyses 2-formamido-N(1)-(5-O-phospho-beta-D-ribosyl)acetamidine + ATP = 5-amino-1-(5-phospho-beta-D-ribosyl)imidazole + ADP + phosphate + H(+). Its pathway is purine metabolism; IMP biosynthesis via de novo pathway; 5-amino-1-(5-phospho-D-ribosyl)imidazole from N(2)-formyl-N(1)-(5-phospho-D-ribosyl)glycinamide: step 2/2. The chain is Phosphoribosylformylglycinamidine cyclo-ligase from Pyrococcus furiosus (strain ATCC 43587 / DSM 3638 / JCM 8422 / Vc1).